The primary structure comprises 323 residues: DNA primase small subunit PriS (323 aa).

Residues D97, D99, and D274 contribute to the active site.

It belongs to the eukaryotic-type primase small subunit family. Heterodimer of a small subunit (PriS) and a large subunit (PriL). The cofactor is Mg(2+). Mn(2+) serves as cofactor.

Its function is as follows. Catalytic subunit of DNA primase, an RNA polymerase that catalyzes the synthesis of short RNA molecules used as primers for DNA polymerase during DNA replication. The small subunit contains the primase catalytic core and has DNA synthesis activity on its own. Binding to the large subunit stabilizes and modulates the activity, increasing the rate of DNA synthesis while decreasing the length of the DNA fragments, and conferring RNA synthesis capability. The DNA polymerase activity may enable DNA primase to also catalyze primer extension after primer synthesis. May also play a role in DNA repair. This chain is DNA primase small subunit PriS, found in Methanothermobacter thermautotrophicus (strain ATCC 29096 / DSM 1053 / JCM 10044 / NBRC 100330 / Delta H) (Methanobacterium thermoautotrophicum).